We begin with the raw amino-acid sequence, 336 residues long: Fructose-1,6-bisphosphatase class 1 (336 aa).

Positions 90, 112, 114, and 115 each coordinate Mg(2+). Residues 115-118, Asn211, and Lys277 contribute to the substrate site; that span reads DGSS. Glu283 serves as a coordination point for Mg(2+).

This sequence belongs to the FBPase class 1 family. Homotetramer. The cofactor is Mg(2+).

Its subcellular location is the cytoplasm. The enzyme catalyses beta-D-fructose 1,6-bisphosphate + H2O = beta-D-fructose 6-phosphate + phosphate. The protein operates within carbohydrate biosynthesis; gluconeogenesis. The polypeptide is Fructose-1,6-bisphosphatase class 1 (Pseudomonas aeruginosa (strain ATCC 15692 / DSM 22644 / CIP 104116 / JCM 14847 / LMG 12228 / 1C / PRS 101 / PAO1)).